Consider the following 167-residue polypeptide: uncharacterized protein (167 aa).

The chain crosses the membrane as a helical span at residues 5–27 (LILLTFVSFVFSKTFYYDVYVFF).

The protein localises to the membrane. This is an uncharacterized protein from Aquifex aeolicus (strain VF5).